We begin with the raw amino-acid sequence, 291 residues long: 4-hydroxy-tetrahydrodipicolinate synthase (291 aa).

Thr44 is a pyruvate binding site. Tyr132 functions as the Proton donor/acceptor in the catalytic mechanism. Lys160 acts as the Schiff-base intermediate with substrate in catalysis. Residue Val202 coordinates pyruvate.

The protein belongs to the DapA family. Homotetramer; dimer of dimers.

The protein localises to the cytoplasm. It catalyses the reaction L-aspartate 4-semialdehyde + pyruvate = (2S,4S)-4-hydroxy-2,3,4,5-tetrahydrodipicolinate + H2O + H(+). It functions in the pathway amino-acid biosynthesis; L-lysine biosynthesis via DAP pathway; (S)-tetrahydrodipicolinate from L-aspartate: step 3/4. In terms of biological role, catalyzes the condensation of (S)-aspartate-beta-semialdehyde [(S)-ASA] and pyruvate to 4-hydroxy-tetrahydrodipicolinate (HTPA). The protein is 4-hydroxy-tetrahydrodipicolinate synthase of Clostridium perfringens (strain SM101 / Type A).